Here is a 753-residue protein sequence, read N- to C-terminus: 5-methyltetrahydropteroyltriglutamate--homocysteine methyltransferase (753 aa).

5-methyltetrahydropteroyltri-L-glutamate-binding positions include 17 to 20 (RELK) and Lys117. Residues 431-433 (IGS) and Glu484 contribute to the L-homocysteine site. L-methionine-binding positions include 431–433 (IGS) and Glu484. 5-methyltetrahydropteroyltri-L-glutamate is bound by residues 515 to 516 (RC) and Trp561. Asp599 serves as a coordination point for L-homocysteine. Asp599 provides a ligand contact to L-methionine. Glu605 lines the 5-methyltetrahydropteroyltri-L-glutamate pocket. Zn(2+) contacts are provided by His641, Cys643, and Glu665. Catalysis depends on His694, which acts as the Proton donor. Cys726 contributes to the Zn(2+) binding site.

The protein belongs to the vitamin-B12 independent methionine synthase family. The cofactor is Zn(2+).

The catalysed reaction is 5-methyltetrahydropteroyltri-L-glutamate + L-homocysteine = tetrahydropteroyltri-L-glutamate + L-methionine. It functions in the pathway amino-acid biosynthesis; L-methionine biosynthesis via de novo pathway; L-methionine from L-homocysteine (MetE route): step 1/1. Catalyzes the transfer of a methyl group from 5-methyltetrahydrofolate to homocysteine resulting in methionine formation. The chain is 5-methyltetrahydropteroyltriglutamate--homocysteine methyltransferase from Shigella flexneri serotype 5b (strain 8401).